We begin with the raw amino-acid sequence, 80 residues long: U-actitoxin-Avd9b (80 aa).

Residues 1–20 form the signal peptide; that stretch reads MNLKVLAVFVLCAILVVVTA. The propeptide occupies 21–39; it reads ERRGTETGGYKKDTLQDLK. The 36-residue stretch at 45 to 80 folds into the ShKT domain; that stretch reads CFDRYREAACTSDNIRLLCKTSAKYQINCKKSCGLC. 3 disulfides stabilise this stretch: Cys45–Cys80, Cys54–Cys73, and Cys63–Cys77. A crucial for binding to potassium channels region spans residues 68-69; the sequence is KY.

This sequence belongs to the sea anemone type 1 potassium channel toxin family. Type 1b subfamily.

Its subcellular location is the secreted. The protein resides in the nematocyst. Its function is as follows. Inhibits voltage-gated potassium channels (Kv1/KCNA). This is U-actitoxin-Avd9b from Anemonia viridis (Snakelocks anemone).